The primary structure comprises 190 residues: Protein LZIC (190 aa).

The stretch at 2–63 (ASRGKTETSK…SEFNDSLKKI (62 aa)) forms a coiled coil.

Belongs to the CTNNBIP1 family. As to quaternary structure, does not interact with CTNNB1.

This Mus musculus (Mouse) protein is Protein LZIC (Lzic).